The chain runs to 638 residues: Actin-regulating kinase 1 (638 aa).

Positions 22–298 constitute a Protein kinase domain; it reads VEIIKYLTSG…VYQLLKRISI (277 aa). Residues 28–36 and K56 contribute to the ATP site; that span reads LTSGGFAQV. The active-site Proton acceptor is D159. Phosphoserine is present on S478. A compositionally biased stretch (polar residues) spans 482 to 515; the sequence is YSTRGNIKKNQSVKESLTSSSLPGTSFTPTSTKV. A disordered region spans residues 482 to 518; the sequence is YSTRGNIKKNQSVKESLTSSSLPGTSFTPTSTKVNLK. Residues S522 and S535 each carry the phosphoserine modification. Positions 569–638 are disordered; the sequence is SEESFNARKM…LAGRKLSLDK (70 aa). Over residues 582-593 the composition is skewed to basic and acidic residues; the sequence is KLHEKGEIDKPT. The segment at 602–615 is interaction with SH3 domain of ABP1; the sequence is SKDKKTKPTPPPKP.

This sequence belongs to the protein kinase superfamily. Ser/Thr protein kinase family. In terms of assembly, interacts with ABP1, which is required for proper actin patch localization.

It is found in the cytoplasm. Its subcellular location is the cytoskeleton. The protein resides in the actin patch. The catalysed reaction is L-seryl-[protein] + ATP = O-phospho-L-seryl-[protein] + ADP + H(+). The enzyme catalyses L-threonyl-[protein] + ATP = O-phospho-L-threonyl-[protein] + ADP + H(+). Involved in regulation of actin cytoskeleton organization and endocytosis. The sequence is that of Actin-regulating kinase 1 (ARK1) from Saccharomyces cerevisiae (strain ATCC 204508 / S288c) (Baker's yeast).